A 574-amino-acid chain; its full sequence is Septation ring formation regulator EzrA (574 aa).

Residues 1–7 (MSSGIIL) are Extracellular-facing. The chain crosses the membrane as a helical span at residues 8–26 (LIVAIVLLVIIAYLVGVII). The Cytoplasmic portion of the chain corresponds to 27-574 (RKRNDSLITS…YEKTREHIRF (548 aa)). Coiled-coil stretches lie at residues 102–141 (NFIR…EEKN), 274–350 (ELVT…ETES), and 459–520 (QLEA…SFEA).

Belongs to the EzrA family.

The protein resides in the cell membrane. Its function is as follows. Negative regulator of FtsZ ring formation; modulates the frequency and position of FtsZ ring formation. Inhibits FtsZ ring formation at polar sites. Interacts either with FtsZ or with one of its binding partners to promote depolymerization. This Streptococcus pyogenes serotype M4 (strain MGAS10750) protein is Septation ring formation regulator EzrA.